The chain runs to 2362 residues: Filaggrin-2 (2362 aa).

An S-100-like region spans residues 1 to 81 (MAYLLRSVVT…TEFILMIFKL (81 aa)). 2 consecutive EF-hand domains span residues 8–43 (VVTI…EFRP) and 49–84 (DDPD…LALA). Residues Asp62, Asp64, Asp66, Arg68, and Glu73 each coordinate Ca(2+). Disordered regions lie at residues 96–238 (ASGS…GLSC) and 284–2109 (GCCR…SSIP). The span at 111–120 (EESETEEEEE) shows a compositional bias: acidic residues. Basic and acidic residues-rich tracts occupy residues 159-174 (KRLE…EESR) and 189-214 (NKEK…PSRE). 2 Filaggrin repeats span residues 261-308 (GYNT…NQSC) and 373-414 (HSSC…SNGF). Composition is skewed to polar residues over residues 284-317 (GCCR…CQSG), 342-375 (SCSQ…SHSS), and 383-395 (GATQ…QQRM). A compositionally biased stretch (low complexity) spans 396–411 (SSCGHSSSSHQKGCSS). 2 stretches are compositionally biased toward polar residues: residues 421-443 (ASGS…SSGF) and 450-469 (SGQS…SGYS). Composition is skewed to low complexity over residues 474 to 519 (GSGQ…QSSG), 539 to 550 (GSRQSSGSEQHG), and 567 to 580 (SQSS…SGSQ). A Filaggrin 3 repeat occupies 555–607 (QSSGSGKHETGPSQSSSSGHHGSGSQQHGGGSGQSTGFGEHESSSGHSSSSGQ). A compositionally biased stretch (gly residues) spans 581–590 (QHGGGSGQST). A compositionally biased stretch (low complexity) spans 599–618 (SGHSSSSGQHRSGSRHSSGS). Residues 632-653 (GHHGSGSQQHGGGSGNSTGFGE) are compositionally biased toward gly residues. Over residues 654–675 (HGSSSHPLPSSGQNESSSGQSS) the composition is skewed to low complexity. A Filaggrin 4 repeat occupies 672-723 (GQSSRSERHGTGSGQSSGFGQHGSGSHQSSSSGHNEYGSGQTSSSWPHGKGS). The segment covering 682–694 (TGSGQSSGFGQHG) has biased composition (gly residues). Composition is skewed to low complexity over residues 695–705 (SGSHQSSSSGH), 728–754 (GYGE…QSSS), and 780–798 (GYGE…WQHG). Gly residues predominate over residues 826–838 (TGSGQSLGFGQHG). A compositionally biased stretch (low complexity) spans 846-864 (SSGHYESVSEPSSSSWQHG). The Filaggrin 5 repeat unit spans residues 880–927 (HGQSSSAWNHGNESGQSNGYGEHESGHGQSSSAWNHGNESGQSNGFGE). Composition is skewed to polar residues over residues 886-896 (AWNHGNESGQS) and 912-925 (AWNH…SNGF). Residues 973-982 (ESSEGEEHSV) show a composition bias toward basic and acidic residues. The stretch at 984–1035 (PRRYSGYGHGQGQAGHQQRESGYGQRGRPQGPSQDSSRQPQAGHGQPSQSGY) is one Filaggrin 6 repeat. Over residues 1014–1035 (GPSQDSSRQPQAGHGQPSQSGY) the composition is skewed to polar residues. The segment covering 1047-1059 (EYSEGEAHSEVSQ) has biased composition (basic and acidic residues). Residues 1067-1077 (CHCHCHGQARH) show a composition bias toward basic residues. Residues 1104-1121 (GPGQPSQSGSRRSPRSQP) show a composition bias toward low complexity. Residues 1142–1152 (SGHGHGQGQGQ) are compositionally biased toward gly residues. Positions 1162–1174 (HGQQGRPQGPSQD) are enriched in polar residues. The Filaggrin 7 repeat unit spans residues 1165-1210 (QGRPQGPSQDSSRQPQAGQGQPSQSGSGRSPRRSPVHPESSEGEEH). Low complexity predominate over residues 1175–1193 (SSRQPQAGQGQPSQSGSGR). Phosphoserine occurs at positions 1198, 1204, and 1205. Positions 1220–1232 (SGHGHGQGQGQGQ) are enriched in gly residues. The segment covering 1255–1273 (SSRQPQAGQGQPSQSGSGR) has biased composition (low complexity). A phosphoserine mark is found at Ser1278, Ser1284, and Ser1285. Residues 1280 to 1334 (VHPESSEGEEHSVVPQRHSGSGHGHGQGQGQAGHQQRESVHGQPVRPEVPTQDSS) form a Filaggrin 8 repeat. The segment covering 1300-1310 (SGHGHGQGQGQ) has biased composition (gly residues). A compositionally biased stretch (low complexity) spans 1333–1351 (SSRQPQAGQGQPSQSGSGR). Ser1356, Ser1362, and Ser1363 each carry phosphoserine. Residues 1377–1396 (ESCHCHCHDQAGHQQRESVH) show a composition bias toward basic and acidic residues. Residues 1413–1436 (PQAGPGQPSQSGSRRSPRSSPVHP) show a composition bias toward low complexity. A phosphoserine mark is found at Ser1438 and Ser1439. Positions 1454–1464 (SGHGHGQGQGQ) are enriched in gly residues. A Filaggrin 9 repeat occupies 1474–1522 (HGQRGRPQGPTQDSSRQPQAGQGQPSQSGSGRSPRRSPVHPESSEGEEH). The span at 1487–1505 (SSRQPQAGQGQPSQSGSGR) shows a compositional bias: low complexity. Phosphoserine occurs at positions 1510, 1516, and 1517. Residues 1532 to 1544 (SGHGHGHGQGQGQ) show a composition bias toward gly residues. Residues 1567 to 1585 (SSRQPQAGQGQPSQSGSGR) show a composition bias toward low complexity. Residues Ser1590, Ser1596, and Ser1597 each carry the phosphoserine modification. Low complexity-rich tracts occupy residues 1643 to 1661 (SSRQ…GSGR) and 1683 to 1696 (QRHS…GQGQ). The segment covering 1698–1708 (HAEHQQRESVH) has biased composition (basic and acidic residues). One copy of the Filaggrin 10 repeat lies at 1723-1756 (RQPQAGQGQPSLSGSGRSPRRSPVHPESSEGEEH). Over residues 1724 to 1739 (QPQAGQGQPSLSGSGR) the composition is skewed to low complexity. Ser1744, Ser1750, Ser1751, Ser1824, Ser1830, and Ser1831 each carry phosphoserine. Low complexity predominate over residues 1801–1825 (SSRQPQAGQGQPSQSGSGRSPGRSP). The segment covering 1829–1848 (ESSEGEEHSVVPQRHSESGH) has biased composition (basic and acidic residues). Residues 1879 to 1897 (SSRQPQAGQGQPSQSGSGR) are compositionally biased toward low complexity. Phosphoserine is present on residues Ser1902, Ser1908, and Ser1909. Residues 1924 to 1934 (SGHGHGQGQGQ) show a composition bias toward gly residues. Over residues 1949–1975 (RPQGPSQDSSSQPQASQGQPSQSGSGR) the composition is skewed to low complexity. 3 positions are modified to phosphoserine: Ser1980, Ser1986, and Ser1987. Residues 2002 to 2012 (SGHGHGQGQGQ) are compositionally biased toward gly residues. Residues 2016–2070 (QQRESLHGQRGRSQSPFHPSHSIHWQSKCTISKKSSRLSGHYGRNHFQSTISGNQ) form a Filaggrin 11 repeat. 3 stretches are compositionally biased toward polar residues: residues 2026-2048 (GRSQ…TISK), 2061-2079 (HFQS…SSRH), and 2100-2109 (LRSNSQSSIP). Residue Ser2104 is modified to Phosphoserine. One copy of the Filaggrin 12 repeat lies at 2218–2259 (DDSQYILFQKHLESPSFGNQSGFSPNERQLYTCNESIDSYHL).

The protein belongs to the S100-fused protein family. It in the N-terminal section; belongs to the S-100 family. Post-translationally, deiminated by PADI1, PADI2 or PADI3 in vitro. The deiminated form is degraded by calpain-1/CAPN1 more quickly and into shorter peptides than the intact protein. In terms of processing, may be processed by calpain-1/CAPN1.

Its subcellular location is the cytoplasm. The protein resides in the cytoplasmic granule. In terms of biological role, essential for normal cell-cell adhesion in the cornified cell layers. Important for proper integrity and mechanical strength of the stratum corneum of the epidermis. This chain is Filaggrin-2 (Flg2), found in Mus musculus (Mouse).